We begin with the raw amino-acid sequence, 201 residues long: Holliday junction branch migration complex subunit RuvA (201 aa).

The tract at residues 1-63 (MIEYVRGELA…EDAYVLYGFA (63 aa)) is domain I. The interval 64–142 (DKQEREIFLL…TMGATVAGGS (79 aa)) is domain II. Residues 143–151 (ASAGMLLQS) are flexible linker. Positions 152–201 (ASVEVQEEAVAALTMLGFAAAPSQKVVLAILKEEPDAPVEKVIKLALKRL) are domain III.

The protein belongs to the RuvA family. Homotetramer. Forms an RuvA(8)-RuvB(12)-Holliday junction (HJ) complex. HJ DNA is sandwiched between 2 RuvA tetramers; dsDNA enters through RuvA and exits via RuvB. An RuvB hexamer assembles on each DNA strand where it exits the tetramer. Each RuvB hexamer is contacted by two RuvA subunits (via domain III) on 2 adjacent RuvB subunits; this complex drives branch migration. In the full resolvosome a probable DNA-RuvA(4)-RuvB(12)-RuvC(2) complex forms which resolves the HJ.

It localises to the cytoplasm. In terms of biological role, the RuvA-RuvB-RuvC complex processes Holliday junction (HJ) DNA during genetic recombination and DNA repair, while the RuvA-RuvB complex plays an important role in the rescue of blocked DNA replication forks via replication fork reversal (RFR). RuvA specifically binds to HJ cruciform DNA, conferring on it an open structure. The RuvB hexamer acts as an ATP-dependent pump, pulling dsDNA into and through the RuvAB complex. HJ branch migration allows RuvC to scan DNA until it finds its consensus sequence, where it cleaves and resolves the cruciform DNA. The sequence is that of Holliday junction branch migration complex subunit RuvA from Bacteroides thetaiotaomicron (strain ATCC 29148 / DSM 2079 / JCM 5827 / CCUG 10774 / NCTC 10582 / VPI-5482 / E50).